The primary structure comprises 245 residues: 4-hydroxy-tetrahydrodipicolinate reductase (245 aa).

Residues 7-12 (GAKGKV), 75-77 (GTT), and 102-105 (APNF) each bind NAD(+). H132 functions as the Proton donor/acceptor in the catalytic mechanism. Residue H133 coordinates (S)-2,3,4,5-tetrahydrodipicolinate. K136 serves as the catalytic Proton donor. Residue 142–143 (GT) coordinates (S)-2,3,4,5-tetrahydrodipicolinate.

It belongs to the DapB family.

The protein localises to the cytoplasm. The enzyme catalyses (S)-2,3,4,5-tetrahydrodipicolinate + NAD(+) + H2O = (2S,4S)-4-hydroxy-2,3,4,5-tetrahydrodipicolinate + NADH + H(+). The catalysed reaction is (S)-2,3,4,5-tetrahydrodipicolinate + NADP(+) + H2O = (2S,4S)-4-hydroxy-2,3,4,5-tetrahydrodipicolinate + NADPH + H(+). It functions in the pathway amino-acid biosynthesis; L-lysine biosynthesis via DAP pathway; (S)-tetrahydrodipicolinate from L-aspartate: step 4/4. Its function is as follows. Catalyzes the conversion of 4-hydroxy-tetrahydrodipicolinate (HTPA) to tetrahydrodipicolinate. The chain is 4-hydroxy-tetrahydrodipicolinate reductase from Mycobacterium bovis (strain ATCC BAA-935 / AF2122/97).